Consider the following 203-residue polypeptide: RNA annealing protein YRA2 (203 aa).

M1 bears the N-acetylmethionine mark. Disordered regions lie at residues 1–60 (MDKA…REEP) and 137–203 (QPQR…YMKG). Polar residues predominate over residues 11–20 (NSHTDSSSNH). Residues 47 to 60 (SRSKDRLYREREEP) are compositionally biased toward basic and acidic residues. Residues 64–138 (KRIRISKIPL…AKIEVEIYQP (75 aa)) form the RRM domain. 2 stretches are compositionally biased toward basic residues: residues 139 to 153 (QRKHSRMNAHNRRKQ) and 161 to 180 (GRPGSHYRQKPNRVSKKNKG).

It belongs to the YRA1 family. As to quaternary structure, associates with mRNPs. Interacts with YRA1.

The protein localises to the nucleus. Functionally, involved in export of poly(A) mRNAs from the nucleus. Recruited to the coding sequences as well as poly-A sites of active genes. This Saccharomyces cerevisiae (strain JAY291) (Baker's yeast) protein is RNA annealing protein YRA2 (YRA2).